The chain runs to 267 residues: PF03932 family protein CutC (267 aa).

This sequence belongs to the CutC family.

It is found in the cytoplasm. The protein is PF03932 family protein CutC of Xylella fastidiosa (strain 9a5c).